Consider the following 858-residue polypeptide: DNA mismatch repair protein MutS (858 aa).

611–618 (GPNMGGKS) serves as a coordination point for ATP.

This sequence belongs to the DNA mismatch repair MutS family.

Functionally, this protein is involved in the repair of mismatches in DNA. It is possible that it carries out the mismatch recognition step. This protein has a weak ATPase activity. This is DNA mismatch repair protein MutS from Actinobacillus succinogenes (strain ATCC 55618 / DSM 22257 / CCUG 43843 / 130Z).